The sequence spans 165 residues: Protein AIG2 C (165 aa).

14–19 (YGSILE) serves as a coordination point for substrate. Glutamate 82 acts as the Proton acceptor in catalysis.

The protein belongs to the gamma-glutamylcyclotransferase family. In terms of tissue distribution, expressed in floral organs, leaves, stems and roots.

Putative gamma-glutamylcyclotransferase. The sequence is that of Protein AIG2 C from Arabidopsis thaliana (Mouse-ear cress).